We begin with the raw amino-acid sequence, 181 residues long: Major urinary protein (181 aa).

The first 19 residues, 1–19, serve as a signal peptide directing secretion; that stretch reads MKLLLLLLCLGLTLVCGHA. Residue N54 is glycosylated (N-linked (GlcNAc...) asparagine). Residues C83 and C176 are joined by a disulfide bond.

It belongs to the calycin superfamily. Lipocalin family. In terms of tissue distribution, abundant in the urine of adult male rats but absent from that of females.

The protein localises to the cytoplasm. Its subcellular location is the cytosol. It localises to the secreted. Functionally, major urinary proteins (Mups) bind and release pheromones. They may also protect pheromones from oxidation. In this context, they play a role in the regulation of social behaviors, such as aggression, mating, pup-suckling, territory establishment and dominance. Acts as a kairomone, detected by the prey vomeronasal organ and inducing fear reactions in mice. In Rattus norvegicus (Rat), this protein is Major urinary protein.